The primary structure comprises 600 residues: Fructan 1-exohydrolase (600 aa).

Residues 1-27 (MAQAWAFLLPVLFFGSYVTNLFLPTYA) form the signal peptide. D73 is an active-site residue. Residues N166, N234, and N246 are each glycosylated (N-linked (GlcNAc...) asparagine). C444 and C490 form a disulfide bridge. Residue N565 is glycosylated (N-linked (GlcNAc...) asparagine).

It belongs to the glycosyl hydrolase 32 family.

It catalyses the reaction Hydrolysis of terminal, non-reducing (2-&gt;1)-linked beta-D-fructofuranose residues in fructans.. With respect to regulation, inhibited by sucrose. Functionally, hydrolyzes inulin-type beta-(2,1)-fructans. May play a role as a beta-(2,1)-trimmer during graminan biosynthesis. The polypeptide is Fructan 1-exohydrolase (Leymus chinensis (Chinese lyme grass)).